The sequence spans 256 residues: Trans-aconitate 2-methyltransferase (256 aa).

Belongs to the methyltransferase superfamily. Tam family.

It localises to the cytoplasm. It carries out the reaction trans-aconitate + S-adenosyl-L-methionine = (E)-3-(methoxycarbonyl)pent-2-enedioate + S-adenosyl-L-homocysteine. Catalyzes the S-adenosylmethionine monomethyl esterification of trans-aconitate. The chain is Trans-aconitate 2-methyltransferase from Rhizobium etli (strain ATCC 51251 / DSM 11541 / JCM 21823 / NBRC 15573 / CFN 42).